The following is a 122-amino-acid chain: Small ribosomal subunit protein bS6 (122 aa).

This sequence belongs to the bacterial ribosomal protein bS6 family.

Functionally, binds together with bS18 to 16S ribosomal RNA. This Vibrio cholerae serotype O1 (strain ATCC 39541 / Classical Ogawa 395 / O395) protein is Small ribosomal subunit protein bS6.